The primary structure comprises 345 residues: S-adenosylmethionine:tRNA ribosyltransferase-isomerase (345 aa).

It belongs to the QueA family. Monomer.

It localises to the cytoplasm. It catalyses the reaction 7-aminomethyl-7-carbaguanosine(34) in tRNA + S-adenosyl-L-methionine = epoxyqueuosine(34) in tRNA + adenine + L-methionine + 2 H(+). Its pathway is tRNA modification; tRNA-queuosine biosynthesis. Its function is as follows. Transfers and isomerizes the ribose moiety from AdoMet to the 7-aminomethyl group of 7-deazaguanine (preQ1-tRNA) to give epoxyqueuosine (oQ-tRNA). This chain is S-adenosylmethionine:tRNA ribosyltransferase-isomerase, found in Shewanella halifaxensis (strain HAW-EB4).